The chain runs to 335 residues: Methionine import ATP-binding protein MetN (335 aa).

The ABC transporter domain maps to 2-241 (IQFQRLHKSY…PQHPTTRRFV (240 aa)). 38–45 (GHSGAGKS) contributes to the ATP binding site.

Belongs to the ABC transporter superfamily. Methionine importer (TC 3.A.1.24) family. In terms of assembly, the complex is composed of two ATP-binding proteins (MetN), two transmembrane proteins (MetI) and a solute-binding protein (MetQ).

The protein resides in the cell inner membrane. It catalyses the reaction L-methionine(out) + ATP + H2O = L-methionine(in) + ADP + phosphate + H(+). It carries out the reaction D-methionine(out) + ATP + H2O = D-methionine(in) + ADP + phosphate + H(+). In terms of biological role, part of the ABC transporter complex MetNIQ involved in methionine import. Responsible for energy coupling to the transport system. The protein is Methionine import ATP-binding protein MetN of Xanthomonas campestris pv. campestris (strain 8004).